The following is a 78-amino-acid chain: DNA-directed RNA polymerase subunit omega (78 aa).

This sequence belongs to the RNA polymerase subunit omega family. In cyanobacteria the RNAP catalytic core is composed of 2 alpha, 1 beta, 1 beta', 1 gamma and 1 omega subunit. When a sigma factor is associated with the core the holoenzyme is formed, which can initiate transcription.

It carries out the reaction RNA(n) + a ribonucleoside 5'-triphosphate = RNA(n+1) + diphosphate. Its function is as follows. Promotes RNA polymerase assembly. Latches the N- and C-terminal regions of the beta' subunit thereby facilitating its interaction with the beta and alpha subunits. In Prochlorococcus marinus (strain MIT 9301), this protein is DNA-directed RNA polymerase subunit omega.